Reading from the N-terminus, the 349-residue chain is Methylthioribose-1-phosphate isomerase (349 aa).

Substrate-binding positions include 51–53 (RGA), Arg-94, and Gln-199. Asp-240 serves as the catalytic Proton donor. 250-251 (NK) contacts substrate.

It belongs to the eIF-2B alpha/beta/delta subunits family. MtnA subfamily. Homodimer.

It catalyses the reaction 5-(methylsulfanyl)-alpha-D-ribose 1-phosphate = 5-(methylsulfanyl)-D-ribulose 1-phosphate. The protein operates within amino-acid biosynthesis; L-methionine biosynthesis via salvage pathway; L-methionine from S-methyl-5-thio-alpha-D-ribose 1-phosphate: step 1/6. Its function is as follows. Catalyzes the interconversion of methylthioribose-1-phosphate (MTR-1-P) into methylthioribulose-1-phosphate (MTRu-1-P). The sequence is that of Methylthioribose-1-phosphate isomerase from Bacillus cytotoxicus (strain DSM 22905 / CIP 110041 / 391-98 / NVH 391-98).